Consider the following 422-residue polypeptide: MYDFVIIGGGIIGMSTAMQLIDVYPDARIALLEKESAPACHQTGHNSGVIHAGVYYTPGSLKAQFCLAGNRATKAFCDQNGIRYDNCGKMLVATSDLEMERMRALWERTAANGIEREWLNADELREREPNITGLGGIFVPSSGIVSYRDVTAAMAKIFQSRGGEIIYNAEVSGLNEHKNGVVIRTRQGGEYEASTLISCSGLMADRLVKMLGLEPGFIICPFRGEYFRLAPEHNQIVNHLIYPIPDPAMPFLGVHLTRMIDGSVTVGPNAVLAFKREGYRKRDFSFSDTLEILGSSGIRRVLQNHLRSGLGEMKNSLCKSGYLRLVQKYCPRLSLSDLQPWPAGVRAQAVSPDGKLIDDFLFVTTPRTIHTCNAPSPAATSAIPIGAHIVSKVQTLLASQSNPGRTLRAARSVDALHAAFNQ.

Belongs to the L2HGDH family. FAD serves as cofactor.

It is found in the cell inner membrane. It catalyses the reaction (S)-2-hydroxyglutarate + a quinone = a quinol + 2-oxoglutarate. It functions in the pathway amino-acid degradation. In terms of biological role, catalyzes the dehydrogenation of L-2-hydroxyglutarate (L2HG) to alpha-ketoglutarate and couples to the respiratory chain by feeding electrons from the reaction into the membrane quinone pool. Functions in a L-lysine degradation pathway that proceeds via cadaverine, glutarate and L-2-hydroxyglutarate. This Escherichia coli (strain K12) protein is L-2-hydroxyglutarate dehydrogenase.